The following is a 592-amino-acid chain: Aspartate--tRNA ligase (592 aa).

Glu177 is a binding site for L-aspartate. The aspartate stretch occupies residues 201-204 (QIFK). Arg223 contacts L-aspartate. ATP-binding positions include 223–225 (RDE) and Gln232. His451 serves as a coordination point for L-aspartate. An ATP-binding site is contributed by Glu485. L-aspartate is bound at residue Arg492. 537–540 (GLDR) is an ATP binding site.

It belongs to the class-II aminoacyl-tRNA synthetase family. Type 1 subfamily. As to quaternary structure, homodimer.

The protein localises to the cytoplasm. The enzyme catalyses tRNA(Asp) + L-aspartate + ATP = L-aspartyl-tRNA(Asp) + AMP + diphosphate. Functionally, catalyzes the attachment of L-aspartate to tRNA(Asp) in a two-step reaction: L-aspartate is first activated by ATP to form Asp-AMP and then transferred to the acceptor end of tRNA(Asp). The chain is Aspartate--tRNA ligase from Bacillus licheniformis (strain ATCC 14580 / DSM 13 / JCM 2505 / CCUG 7422 / NBRC 12200 / NCIMB 9375 / NCTC 10341 / NRRL NRS-1264 / Gibson 46).